The sequence spans 101 residues: Citrinin resistance protein, mitochondrial (101 aa).

The protein resides in the mitochondrion. Mitochondrial protein that is involved in citrinin resistance. The chain is Citrinin resistance protein, mitochondrial from Saccharomyces cerevisiae (strain ATCC 204508 / S288c) (Baker's yeast).